The following is a 385-amino-acid chain: Ethanolamine kinase 2 (385 aa).

Belongs to the choline/ethanolamine kinase family.

It catalyses the reaction ethanolamine + ATP = phosphoethanolamine + ADP + H(+). It functions in the pathway phospholipid metabolism; phosphatidylethanolamine biosynthesis; phosphatidylethanolamine from ethanolamine: step 1/3. Highly specific for ethanolamine phosphorylation. Does not have choline kinase activity. This chain is Ethanolamine kinase 2 (Etnk2), found in Rattus norvegicus (Rat).